Here is a 156-residue protein sequence, read N- to C-terminus: uncharacterized protein (156 aa).

This is an uncharacterized protein from Escherichia coli (strain K12).